The following is a 135-amino-acid chain: MPRAIFEEDAAQLKLGPEFENEDMLTVSEAKILIETVLAQRARETNGEIPMTDVMKKTVAYFNVFARFKTAEATYACERILGNRFHKFERAQLGTLCCEDAEEARTLIPSLANKIDDQNLQGILDELSTLRKFQD.

It belongs to the eukaryotic RPB4 RNA polymerase subunit family. In terms of assembly, component of the RNA polymerase II (Pol II) complex consisting of 12 subunits. RPB4 and RPB7 form a Pol II subcomplex.

It localises to the nucleus. Functionally, DNA-dependent RNA polymerase catalyzes the transcription of DNA into RNA using the four ribonucleoside triphosphates as substrates. Component of RNA polymerase II which synthesizes mRNA precursors and many functional non-coding RNAs. Pol II is the central component of the basal RNA polymerase II transcription machinery. It is composed of mobile elements that move relative to each other. RPB4 is part of a subcomplex with RPB7 that binds to a pocket formed by RPB1, RPB2 and RPB6 at the base of the clamp element. The RPB4-RPB7 subcomplex seems to lock the clamp via RPB7 in the closed conformation thus preventing double-stranded DNA to enter the active site cleft. The RPB4-RPB7 subcomplex binds single-stranded DNA and RNA. The protein is DNA-directed RNA polymerase II subunit rpb4 (rpb4) of Schizosaccharomyces pombe (strain 972 / ATCC 24843) (Fission yeast).